The primary structure comprises 317 residues: Bile salt hydrolase/transferase (317 aa).

The Nucleophile; acyl-thioester intermediate role is filled by Cys2. The deoxycholate site is built by Cys2 and Arg18. Asn82 contributes to the taurine binding site.

The protein belongs to the peptidase C59 family. In terms of assembly, homotetramer. The tetramer consists of a dimer of dimers.

It catalyses the reaction glycocholate + H2O = cholate + glycine. The catalysed reaction is glycodeoxycholate + H2O = deoxycholate + glycine. The enzyme catalyses chenodeoxycholate + glycine = glycochenodeoxycholate + H2O. It carries out the reaction cholate + taurine = taurocholate + H2O. It catalyses the reaction taurodeoxycholate + H2O = deoxycholate + taurine. The catalysed reaction is taurochenodeoxycholate + H2O = chenodeoxycholate + taurine. The enzyme catalyses an L-alpha-amino acid + cholate = an N-choloyl-L-alpha-amino acid + H2O. It carries out the reaction an L-alpha-amino acid + taurocholate = an N-choloyl-L-alpha-amino acid + taurine. It catalyses the reaction cholate + L-alanine = L-alanocholate + H2O. The catalysed reaction is taurocholate + L-alanine = L-alanocholate + taurine. The enzyme catalyses cholate + L-serine = L-serocholate + H2O. It carries out the reaction taurocholate + L-serine = L-serocholate + taurine. It catalyses the reaction cholate + L-histidine = L-histidocholate + H2O. The catalysed reaction is taurocholate + L-histidine = L-histidocholate + taurine. It functions in the pathway lipid metabolism; bile acid biosynthesis. Its function is as follows. Possesses dual functions in bile acid metabolism. Acts as a bile salt hydrolase that catalyzes the deconjugation of glycine- and taurine-linked bile salts, which occurs naturally in the intestines of humans, releasing amino acid residues and deconjugated bile salts (bile acids). Can hydrolyze the amide bond in all six major human conjugated bile salts, namely glycocholate (GCA), glycodeoxycholate (GDCA), glycochenodeoxycholate (GCDCA), taurocholate (TCA), taurodeoxycholate (TDCA) and taurochenodeoxycholate (TCDCA). Shows a slight preference for glycine-conjugated bile acids as substrates. Also acts as an amine N-acyltransferase that conjugates a wide variety of amino acids to conjugated and non-conjugated bile acids, thus producing bacterial bile acid amidates (BBAAs) - also named microbially conjugated bile acids (MCBAs) - in the gastrointestinal tract. These BBAAs may facilitate communication between the microbiota and host through the activation of human ligand-activated transcription factors. In Bifidobacterium longum subsp. longum (strain ATCC 15707 / DSM 20219 / JCM 1217 / NCTC 11818 / E194b), this protein is Bile salt hydrolase/transferase.